The following is a 102-amino-acid chain: Cytochrome c (102 aa).

G1 is subject to N-acetylglycine. Residues 1-11 (GDAERGKKLFE) show a composition bias toward basic and acidic residues. The disordered stretch occupies residues 1-26 (GDAERGKKLFESRAGQCHSSQKGVNS). 3 residues coordinate heme c: C17, H18, and M79. Residues 17–26 (CHSSQKGVNS) show a composition bias toward polar residues. At K85 the chain carries N6,N6,N6-trimethyllysine.

It belongs to the cytochrome c family. Binds 1 heme c group covalently per subunit.

It is found in the mitochondrion intermembrane space. Its function is as follows. Electron carrier protein. The oxidized form of the cytochrome c heme group can accept an electron from the heme group of the cytochrome c1 subunit of cytochrome reductase. Cytochrome c then transfers this electron to the cytochrome oxidase complex, the final protein carrier in the mitochondrial electron-transport chain. The chain is Cytochrome c from Euglena viridis (Cercaria viridis).